A 375-amino-acid chain; its full sequence is Succinyl-diaminopimelate desuccinylase (375 aa).

H66 serves as a coordination point for Zn(2+). D68 is a catalytic residue. D99 lines the Zn(2+) pocket. The active-site Proton acceptor is the E133. Residues E134, E162, and H348 each coordinate Zn(2+).

Belongs to the peptidase M20A family. DapE subfamily. In terms of assembly, homodimer. The cofactor is Zn(2+). Co(2+) is required as a cofactor.

It carries out the reaction N-succinyl-(2S,6S)-2,6-diaminopimelate + H2O = (2S,6S)-2,6-diaminopimelate + succinate. Its pathway is amino-acid biosynthesis; L-lysine biosynthesis via DAP pathway; LL-2,6-diaminopimelate from (S)-tetrahydrodipicolinate (succinylase route): step 3/3. In terms of biological role, catalyzes the hydrolysis of N-succinyl-L,L-diaminopimelic acid (SDAP), forming succinate and LL-2,6-diaminopimelate (DAP), an intermediate involved in the bacterial biosynthesis of lysine and meso-diaminopimelic acid, an essential component of bacterial cell walls. The protein is Succinyl-diaminopimelate desuccinylase of Yersinia enterocolitica serotype O:8 / biotype 1B (strain NCTC 13174 / 8081).